A 57-amino-acid polypeptide reads, in one-letter code: Light-harvesting protein B-808/866 alpha chain (57 aa).

Met-1 carries the post-translational modification N-formylmethionine. The Cytoplasmic segment spans residues 1–10 (MQPRSPVRTN). Residues 11 to 30 (IVIFTILGFVVALLIHFIVL) traverse the membrane as a helical segment. His-26 is a binding site for a bacteriochlorophyll. Over 31-57 (SSPEYNWLSNAEGGALLLSAARALFGI) the chain is Periplasmic.

Belongs to the antenna complex alpha subunit family. As to quaternary structure, the core complex is formed by different alpha and beta chains, binding bacteriochlorophyll molecules, and arranged most probably in tetrameric structures disposed around the reaction center. The non-pigmented gamma chains may constitute additional components.

It is found in the cell membrane. In terms of biological role, antenna complexes are light-harvesting systems, which transfer the excitation energy to the reaction centers. In Chloroflexus aurantiacus (strain ATCC 29366 / DSM 635 / J-10-fl), this protein is Light-harvesting protein B-808/866 alpha chain (puf2A).